A 331-amino-acid chain; its full sequence is 6-phosphogluconolactonase (331 aa).

Lys-287 bears the N6-acetyllysine mark.

It belongs to the cycloisomerase 2 family.

The enzyme catalyses 6-phospho-D-glucono-1,5-lactone + H2O = 6-phospho-D-gluconate + H(+). It functions in the pathway carbohydrate degradation; pentose phosphate pathway; D-ribulose 5-phosphate from D-glucose 6-phosphate (oxidative stage): step 2/3. In terms of biological role, catalyzes the hydrolysis of 6-phosphogluconolactone to 6-phosphogluconate. In Shigella boydii serotype 18 (strain CDC 3083-94 / BS512), this protein is 6-phosphogluconolactonase.